A 156-amino-acid chain; its full sequence is Small ribosomal subunit protein uS7 (156 aa).

This sequence belongs to the universal ribosomal protein uS7 family. As to quaternary structure, part of the 30S ribosomal subunit. Contacts proteins S9 and S11.

Functionally, one of the primary rRNA binding proteins, it binds directly to 16S rRNA where it nucleates assembly of the head domain of the 30S subunit. Is located at the subunit interface close to the decoding center, probably blocks exit of the E-site tRNA. This is Small ribosomal subunit protein uS7 from Desulfitobacterium hafniense (strain DSM 10664 / DCB-2).